We begin with the raw amino-acid sequence, 148 residues long: Leghemoglobin 2 (148 aa).

The Globin domain occupies 2–148; that stretch reads GFTEKQEALV…LSAAIKKAMS (147 aa). The residue at position 30 (Tyr30) is a Nitrated tyrosine. Ser45 provides a ligand contact to heme b. Ser45 carries the post-translational modification Phosphoserine. His63 contributes to the O2 binding site. Heme b contacts are provided by Lys66, His95, and Lys98. Nitrated tyrosine is present on Tyr136.

It belongs to the plant globin family. As to quaternary structure, monomer. Nitrated in effective nodules and particularly in hypoxic conditions; this mechanism may play a protective role in the symbiosis by buffering toxic peroxynitrite NO(2)(-). Nitration level decrease during nodule senescence. Post-translationally, phosphorylation at Ser-45 disrupts the molecular environment of its porphyrin ring oxygen binding pocket, thus leading to a reduced oxygen consumption and to the delivery of oxygen O(2) to symbiosomes. Stem nodules.

Its subcellular location is the cytoplasm. It is found in the cytosol. It localises to the nucleus. Functionally, leghemoglobin that reversibly binds oxygen O(2) through a pentacoordinated heme iron. In stem nodules, facilitates the diffusion of oxygen to the bacteroids while preventing the bacterial nitrogenase from being inactivated by buffering dioxygen, nitric oxide and carbon monoxide, and promoting the formation of reactive oxygen species (ROS, e.g. H(2)O(2)). This role is essential for symbiotic nitrogen fixation (SNF). The chain is Leghemoglobin 2 from Sesbania rostrata.